We begin with the raw amino-acid sequence, 183 residues long: I-kappa-B like protein N2 (183 aa).

2 ANK repeats span residues 62–95 (DGNT…DLNL) and 99–129 (CHKP…NLEA). Residues 163 to 183 (PRQDGSSEDEVSDSEEKSDSE) form a disordered region.

The protein belongs to the polydnaviridae I-Kappa-B like protein family.

Suppresses the host immune response through NF-kappa-B inactivation. Possesses ankyrin repeat domains required for NF-kappa-B binding but lacks the regulatory regions required for dissociation from NF-kappa-B and degradation. Therefore, prevents host NF-kappa-B release and subsequent activation. This is I-kappa-B like protein N2 (N5) from Microplitis demolitor (Parasitoid wasp).